An 819-amino-acid polypeptide reads, in one-letter code: Nuclear pore complex protein Nup93 (819 aa).

Thr49 is subject to Phosphothreonine. A phosphoserine mark is found at Ser52, Ser66, Ser72, Ser75, Ser80, Ser430, and Ser767.

This sequence belongs to the nucleoporin interacting component (NIC) family. Part of the nuclear pore complex (NPC). Component of the p62 complex, a complex composed of NUP62 and NUP54. Forms a complex with NUP35, NUP155, NUP205 and lamin B; the interaction with NUP35 is direct. Does not interact with TPR. Interacts with SMAD4 and IPO7; translocates SMAD4 to the nucleus through the NPC upon BMP7 stimulation resulting in activation of SMAD4 signaling.

It localises to the nucleus membrane. It is found in the nucleus. The protein resides in the nuclear pore complex. Its subcellular location is the nucleus envelope. Plays a role in the nuclear pore complex (NPC) assembly and/or maintenance. May anchor nucleoporins, but not NUP153 and TPR, to the NPC. During renal development, regulates podocyte migration and proliferation through SMAD4 signaling. In Pongo abelii (Sumatran orangutan), this protein is Nuclear pore complex protein Nup93 (NUP93).